We begin with the raw amino-acid sequence, 236 residues long: Serine/arginine-rich SC35-like splicing factor SCL28 (236 aa).

2 disordered regions span residues 1–53 (MARA…LIRN) and 124–219 (EENR…RVLT). Residues 14-43 (RPRDRSPPRERKGYDDNRLRERPSSRDHES) are compositionally biased toward basic and acidic residues. Residues 47–125 (SGLLIRNLPL…REIAIVFAEE (79 aa)) form the RRM domain. Positions 149–176 (TSHRSPRRRYRSHSRSRSPPRRESRHSK) are enriched in basic residues. A Phosphoserine modification is found at Ser-184. The segment covering 199-217 (RNEREYKSRNCRSPREERV) has biased composition (basic and acidic residues).

This sequence belongs to the splicing factor SR family. SCL subfamily. As to quaternary structure, component of the spliceosome. Interacts with RS2Z33, CYP59, CYP63 and CYP95.

It is found in the nucleus speckle. Functionally, involved in intron recognition and spliceosome assembly. Probably active at the 5' splice sites. In Arabidopsis thaliana (Mouse-ear cress), this protein is Serine/arginine-rich SC35-like splicing factor SCL28 (SCL28).